We begin with the raw amino-acid sequence, 118 residues long: Putative pterin-4-alpha-carbinolamine dehydratase (118 aa).

It belongs to the pterin-4-alpha-carbinolamine dehydratase family.

It catalyses the reaction (4aS,6R)-4a-hydroxy-L-erythro-5,6,7,8-tetrahydrobiopterin = (6R)-L-erythro-6,7-dihydrobiopterin + H2O. The sequence is that of Putative pterin-4-alpha-carbinolamine dehydratase from Stutzerimonas stutzeri (strain A1501) (Pseudomonas stutzeri).